Reading from the N-terminus, the 304-residue chain is Quinolinate synthase (304 aa).

Iminosuccinate contacts are provided by histidine 24 and serine 41. Cysteine 86 is a [4Fe-4S] cluster binding site. Iminosuccinate-binding positions include 112–114 (YVN) and serine 129. Cysteine 171 is a [4Fe-4S] cluster binding site. Iminosuccinate-binding positions include 197 to 199 (HPE) and threonine 214. Cysteine 259 lines the [4Fe-4S] cluster pocket.

This sequence belongs to the quinolinate synthase family. Type 2 subfamily. Requires [4Fe-4S] cluster as cofactor.

It localises to the cytoplasm. It catalyses the reaction iminosuccinate + dihydroxyacetone phosphate = quinolinate + phosphate + 2 H2O + H(+). Its pathway is cofactor biosynthesis; NAD(+) biosynthesis; quinolinate from iminoaspartate: step 1/1. Catalyzes the condensation of iminoaspartate with dihydroxyacetone phosphate to form quinolinate. This chain is Quinolinate synthase, found in Methanosarcina barkeri (strain Fusaro / DSM 804).